The primary structure comprises 210 residues: Ribosomal RNA small subunit methyltransferase G (210 aa).

S-adenosyl-L-methionine contacts are provided by residues glycine 75, phenylalanine 80, glutamate 98–threonine 100, alanine 126–glutamate 127, and arginine 141.

It belongs to the methyltransferase superfamily. RNA methyltransferase RsmG family.

Its subcellular location is the cytoplasm. Its function is as follows. Specifically methylates the N7 position of a guanine in 16S rRNA. The protein is Ribosomal RNA small subunit methyltransferase G of Solibacter usitatus (strain Ellin6076).